The chain runs to 95 residues: Small ribosomal subunit protein bS6 (95 aa).

It belongs to the bacterial ribosomal protein bS6 family.

In terms of biological role, binds together with bS18 to 16S ribosomal RNA. This chain is Small ribosomal subunit protein bS6, found in Clostridium acetobutylicum (strain ATCC 824 / DSM 792 / JCM 1419 / IAM 19013 / LMG 5710 / NBRC 13948 / NRRL B-527 / VKM B-1787 / 2291 / W).